The sequence spans 1364 residues: DNA-directed RNA polymerase subunit beta (1364 aa).

Belongs to the RNA polymerase beta chain family. In terms of assembly, the RNAP catalytic core consists of 2 alpha, 1 beta, 1 beta' and 1 omega subunit. When a sigma factor is associated with the core the holoenzyme is formed, which can initiate transcription.

It catalyses the reaction RNA(n) + a ribonucleoside 5'-triphosphate = RNA(n+1) + diphosphate. Functionally, DNA-dependent RNA polymerase catalyzes the transcription of DNA into RNA using the four ribonucleoside triphosphates as substrates. In Desulfatibacillum aliphaticivorans, this protein is DNA-directed RNA polymerase subunit beta.